The primary structure comprises 283 residues: Urease accessory protein UreD 1 (283 aa).

It belongs to the UreD family. In terms of assembly, ureD, UreF and UreG form a complex that acts as a GTP-hydrolysis-dependent molecular chaperone, activating the urease apoprotein by helping to assemble the nickel containing metallocenter of UreC. The UreE protein probably delivers the nickel.

It localises to the cytoplasm. Its function is as follows. Required for maturation of urease via the functional incorporation of the urease nickel metallocenter. This Brucella anthropi (strain ATCC 49188 / DSM 6882 / CCUG 24695 / JCM 21032 / LMG 3331 / NBRC 15819 / NCTC 12168 / Alc 37) (Ochrobactrum anthropi) protein is Urease accessory protein UreD 1.